Consider the following 396-residue polypeptide: Flavohemoprotein (396 aa).

A Globin domain is found at 1 to 136 (MLDAQTIATV…LANVFIHREA (136 aa)). H85 provides a ligand contact to heme b. Residues Y95 and E135 each act as charge relay system in the active site. The segment at 147 to 396 (GGWEGTRPFR…YECFGPHKVL (250 aa)) is reductase. The FAD-binding FR-type domain maps to 150–255 (EGTRPFRIVA…AAPAGDFFMN (106 aa)). FAD contacts are provided by residues Y188 and 204–207 (RQYS). 268–273 (GVGQTP) is an NADP(+) binding site. Position 389 to 392 (389 to 392 (CFGP)) interacts with FAD.

The protein belongs to the globin family. Two-domain flavohemoproteins subfamily. It in the C-terminal section; belongs to the flavoprotein pyridine nucleotide cytochrome reductase family. In terms of assembly, monomer. The cofactor is heme b. FAD serves as cofactor.

It catalyses the reaction 2 nitric oxide + NADPH + 2 O2 = 2 nitrate + NADP(+) + H(+). The enzyme catalyses 2 nitric oxide + NADH + 2 O2 = 2 nitrate + NAD(+) + H(+). In terms of biological role, is involved in NO detoxification in an aerobic process, termed nitric oxide dioxygenase (NOD) reaction that utilizes O(2) and NAD(P)H to convert NO to nitrate, which protects the bacterium from various noxious nitrogen compounds. Therefore, plays a central role in the inducible response to nitrosative stress. This chain is Flavohemoprotein (hmp), found in Salmonella typhimurium (strain LT2 / SGSC1412 / ATCC 700720).